The sequence spans 108 residues: Nucleoid-associated protein BP1550 (108 aa).

Positions 87–108 (SQEKMASVTAGMPLPPGMKLPF) are disordered. A compositionally biased stretch (pro residues) spans 99–108 (PLPPGMKLPF).

It belongs to the YbaB/EbfC family. As to quaternary structure, homodimer.

It is found in the cytoplasm. The protein localises to the nucleoid. Functionally, binds to DNA and alters its conformation. May be involved in regulation of gene expression, nucleoid organization and DNA protection. The chain is Nucleoid-associated protein BP1550 from Bordetella pertussis (strain Tohama I / ATCC BAA-589 / NCTC 13251).